A 704-amino-acid polypeptide reads, in one-letter code: DNA ligase (704 aa).

NAD(+) contacts are provided by residues 43–47, 92–93, and glutamate 124; these read DADYD and SL. The N6-AMP-lysine intermediate role is filled by lysine 126. The NAD(+) site is built by arginine 147, glutamate 182, lysine 298, and lysine 322. Cysteine 427, cysteine 430, cysteine 445, and cysteine 451 together coordinate Zn(2+). One can recognise a BRCT domain in the interval 625-704; it reads PVASPVAGRI…DGWLRLIGDA (80 aa).

Belongs to the NAD-dependent DNA ligase family. LigA subfamily. The cofactor is Mg(2+). Requires Mn(2+) as cofactor.

The enzyme catalyses NAD(+) + (deoxyribonucleotide)n-3'-hydroxyl + 5'-phospho-(deoxyribonucleotide)m = (deoxyribonucleotide)n+m + AMP + beta-nicotinamide D-nucleotide.. Functionally, DNA ligase that catalyzes the formation of phosphodiester linkages between 5'-phosphoryl and 3'-hydroxyl groups in double-stranded DNA using NAD as a coenzyme and as the energy source for the reaction. It is essential for DNA replication and repair of damaged DNA. The chain is DNA ligase from Cereibacter sphaeroides (strain KD131 / KCTC 12085) (Rhodobacter sphaeroides).